The primary structure comprises 288 residues: Carbon monoxide dehydrogenase medium chain (288 aa).

One can recognise an FAD-binding PCMH-type domain in the interval 1–177; that stretch reads MIPGSFDYHR…TAIRIPVPPT (177 aa). FAD-binding positions include 32 to 36 and 111 to 115; these read AGGHS and TIGGN.

Dimer of heterotrimers. Each heterotrimer consists of a large, a medium and a small subunit. The cofactor is FAD.

The enzyme catalyses CO + a quinone + H2O = a quinol + CO2. In terms of biological role, catalyzes the oxidation of carbon monoxide to carbon dioxide. The chain is Carbon monoxide dehydrogenase medium chain (coxM) from Afipia carboxidovorans (strain ATCC 49405 / DSM 1227 / KCTC 32145 / OM5) (Oligotropha carboxidovorans).